The chain runs to 68 residues: Alpha-conotoxin-like Ca1.2 (68 aa).

The first 21 residues, 1-21 (MGMRMMFTVFLLVVLATTVVS), serve as a signal peptide directing secretion. Residues 22 to 48 (FTSDRASEGRNAAAKDKASDLVALTVR) constitute a propeptide that is removed on maturation. Cystine bridges form between Cys50-Cys56 and Cys51-Cys64. A lacks the Ser-Xaa-Pro motif that is crucial for potent interaction with nAChR region spans residues 52-54 (AIR). Tyr63 bears the Sulfotyrosine mark. A Cysteine amide modification is found at Cys64. A propeptide spanning residues 65-68 (GGIY) is cleaved from the precursor.

Belongs to the conotoxin A superfamily. In terms of tissue distribution, expressed by the venom duct.

The protein localises to the secreted. Functionally, alpha-conotoxins act on postsynaptic membranes, they bind to the nicotinic acetylcholine receptors (nAChR) and thus inhibit them. Has possibly a distinct nAChR binding mode from other alpha-conotoxins, due to a different three residue motif (lacks the Ser-Xaa-Pro motif). The chain is Alpha-conotoxin-like Ca1.2 from Conus caracteristicus (Characteristic cone).